The chain runs to 227 residues: Small ribosomal subunit protein uS3 (227 aa).

Residues 39–107 enclose the KH type-2 domain; it reads VRQLLQKRLK…PVHITIEEVR (69 aa).

Belongs to the universal ribosomal protein uS3 family. Part of the 30S ribosomal subunit. Forms a tight complex with proteins S10 and S14.

Its function is as follows. Binds the lower part of the 30S subunit head. Binds mRNA in the 70S ribosome, positioning it for translation. In Coxiella burnetii (strain RSA 493 / Nine Mile phase I), this protein is Small ribosomal subunit protein uS3 (rpsC).